The chain runs to 256 residues: Major prion protein (256 aa).

Positions 1–24 (MVKSHIGSWILVLFVAMWSDVGLC) are cleaved as a signal peptide. The interaction with GRB2, ERI3 and SYN1 stretch occupies residues 25–233 (KKRPKPGGGW…ESQAYYQRGA (209 aa)). Residues 28 to 110 (PKPGGGWNTG…QWNKPSKPKT (83 aa)) are disordered. Tandem repeats lie at residues 54-62 (PQGGGGWGQ), 63-70 (PHGGGWGQ), 71-78 (PHGGGWGQ), 79-86 (PHGGGWGQ), and 87-95 (PHGGGGWGQ). The segment at 54-95 (PQGGGGWGQPHGGGWGQPHGGGWGQPHGGGWGQPHGGGGWGQ) is 5 X 8 AA tandem repeats of P-H-G-G-G-W-G-Q. Residues 55–97 (QGGGGWGQPHGGGWGQPHGGGWGQPHGGGWGQPHGGGGWGQGG) are compositionally biased toward gly residues. Cu(2+) is bound by residues His-64, Gly-65, Gly-66, His-72, Gly-73, Gly-74, His-80, Gly-81, Gly-82, His-88, Gly-90, and Gly-91. Cys-182 and Cys-217 are joined by a disulfide. N-linked (GlcNAc...) asparagine glycans are attached at residues Asn-184 and Asn-200. Residue Ala-233 is the site of GPI-anchor amidated alanine attachment. Positions 234–256 (SVILFSPPPVILLISFLIFLIVG) are cleaved as a propeptide — removed in mature form.

The protein belongs to the prion family. Monomer and homodimer. Has a tendency to aggregate into amyloid fibrils containing a cross-beta spine, formed by a steric zipper of superposed beta-strands. Soluble oligomers may represent an intermediate stage on the path to fibril formation. Copper binding may promote oligomerization. Interacts with GRB2, APP, ERI3/PRNPIP and SYN1. Mislocalized cytosolically exposed PrP interacts with MGRN1; this interaction alters MGRN1 subcellular location and causes lysosomal enlargement. Interacts with KIAA1191.

The protein localises to the cell membrane. It localises to the golgi apparatus. In terms of biological role, its primary physiological function is unclear. Has cytoprotective activity against internal or environmental stresses. May play a role in neuronal development and synaptic plasticity. May be required for neuronal myelin sheath maintenance. May play a role in iron uptake and iron homeostasis. Soluble oligomers are toxic to cultured neuroblastoma cells and induce apoptosis (in vitro). Association with GPC1 (via its heparan sulfate chains) targets PRNP to lipid rafts. Also provides Cu(2+) or Zn(2+) for the ascorbate-mediated GPC1 deaminase degradation of its heparan sulfate side chains. This Capra hircus (Goat) protein is Major prion protein (PRNP).